We begin with the raw amino-acid sequence, 105 residues long: MADTTRKSGSRRLARERIAVLFARAAEFYPESPDRSNRCVELARKIGMRHRIRIERPLKRRFCRRCYTYLVPGSNARVRVHRGRVVVTCLACGHRSRFPVGRPRQ.

The Zn(2+) site is built by cysteine 63, cysteine 66, cysteine 89, and cysteine 92.

The protein belongs to the eukaryotic/archaeal RNase P protein component 4 family. Consists of a catalytic RNA component and at least 4-5 protein subunits. Zn(2+) is required as a cofactor.

Its subcellular location is the cytoplasm. It catalyses the reaction Endonucleolytic cleavage of RNA, removing 5'-extranucleotides from tRNA precursor.. In terms of biological role, part of ribonuclease P, a protein complex that generates mature tRNA molecules by cleaving their 5'-ends. This is Ribonuclease P protein component 4 from Methanoculleus marisnigri (strain ATCC 35101 / DSM 1498 / JR1).